A 92-amino-acid polypeptide reads, in one-letter code: Small ribosomal subunit protein uS19c (92 aa).

The protein belongs to the universal ribosomal protein uS19 family.

Its subcellular location is the plastid. It is found in the chloroplast. Protein S19 forms a complex with S13 that binds strongly to the 16S ribosomal RNA. This chain is Small ribosomal subunit protein uS19c, found in Draba nemorosa (Woodland whitlowgrass).